Reading from the N-terminus, the 410-residue chain is Sensor-like histidine kinase SenX3 (410 aa).

2 helical membrane-spanning segments follow: residues 6-26 (ALLLAGVLSALALAVGGAVGM) and 46-66 (ITVSQMLQCIVTLMPLGAAVV). The Histidine kinase domain occupies 164–380 (NVSHELKTPV…TFTLALPALI (217 aa)). Position 167 is a phosphohistidine; by autocatalysis (histidine 167). The segment at 385–410 (DDERPEQAREPELRSNRSQREEELSR) is disordered.

Autophosphorylated.

It localises to the cell membrane. It catalyses the reaction ATP + protein L-histidine = ADP + protein N-phospho-L-histidine.. In terms of biological role, member of the two-component regulatory system SenX3/RegX3. Autophosphorylates, and then transfers the phosphate group to RegX3. The sequence is that of Sensor-like histidine kinase SenX3 from Mycobacterium bovis (strain ATCC BAA-935 / AF2122/97).